A 370-amino-acid chain; its full sequence is Phospho-2-dehydro-3-deoxyheptonate aldolase, tyrosine-inhibited (370 aa).

Serine 2 carries the N-acetylserine modification.

The protein belongs to the class-I DAHP synthase family.

It carries out the reaction D-erythrose 4-phosphate + phosphoenolpyruvate + H2O = 7-phospho-2-dehydro-3-deoxy-D-arabino-heptonate + phosphate. The protein operates within metabolic intermediate biosynthesis; chorismate biosynthesis; chorismate from D-erythrose 4-phosphate and phosphoenolpyruvate: step 1/7. Its activity is regulated as follows. Inhibited by tyrosine. Its function is as follows. Stereospecific condensation of phosphoenolpyruvate (PEP) and D-erythrose-4-phosphate (E4P) giving rise to 3-deoxy-D-arabino-heptulosonate-7-phosphate (DAHP). The sequence is that of Phospho-2-dehydro-3-deoxyheptonate aldolase, tyrosine-inhibited (ARO4) from Saccharomyces cerevisiae (strain ATCC 204508 / S288c) (Baker's yeast).